A 330-amino-acid polypeptide reads, in one-letter code: Aspartate--ammonia ligase (330 aa).

This sequence belongs to the class-II aminoacyl-tRNA synthetase family. AsnA subfamily.

The protein resides in the cytoplasm. The catalysed reaction is L-aspartate + NH4(+) + ATP = L-asparagine + AMP + diphosphate + H(+). Its pathway is amino-acid biosynthesis; L-asparagine biosynthesis; L-asparagine from L-aspartate (ammonia route): step 1/1. The sequence is that of Aspartate--ammonia ligase from Shigella boydii serotype 18 (strain CDC 3083-94 / BS512).